Reading from the N-terminus, the 351-residue chain is Glycerol-3-phosphate dehydrogenase [NAD(P)+] (351 aa).

Positions 12, 13, 33, and 114 each coordinate NADPH. Sn-glycerol 3-phosphate-binding residues include Lys-114, Gly-145, and Ser-147. Ala-149 serves as a coordination point for NADPH. The sn-glycerol 3-phosphate site is built by Lys-200, Asp-253, Ser-263, Arg-264, and Asn-265. Catalysis depends on Lys-200, which acts as the Proton acceptor. Arg-264 serves as a coordination point for NADPH. Residues Val-288 and Glu-290 each coordinate NADPH.

The protein belongs to the NAD-dependent glycerol-3-phosphate dehydrogenase family.

The protein resides in the cytoplasm. The enzyme catalyses sn-glycerol 3-phosphate + NAD(+) = dihydroxyacetone phosphate + NADH + H(+). The catalysed reaction is sn-glycerol 3-phosphate + NADP(+) = dihydroxyacetone phosphate + NADPH + H(+). It functions in the pathway membrane lipid metabolism; glycerophospholipid metabolism. Functionally, catalyzes the reduction of the glycolytic intermediate dihydroxyacetone phosphate (DHAP) to sn-glycerol 3-phosphate (G3P), the key precursor for phospholipid synthesis. The sequence is that of Glycerol-3-phosphate dehydrogenase [NAD(P)+] from Lacticaseibacillus casei (strain BL23) (Lactobacillus casei).